Here is a 221-residue protein sequence, read N- to C-terminus: RNA pyrophosphohydrolase (221 aa).

Residues 6–149 (GFRPNVGIVL…KRSVYALALT (144 aa)) form the Nudix hydrolase domain. The Nudix box motif lies at 38-59 (GGIDRGETPEQAMFRELHEEVG).

Belongs to the Nudix hydrolase family. RppH subfamily. Requires a divalent metal cation as cofactor.

In terms of biological role, accelerates the degradation of transcripts by removing pyrophosphate from the 5'-end of triphosphorylated RNA, leading to a more labile monophosphorylated state that can stimulate subsequent ribonuclease cleavage. The polypeptide is RNA pyrophosphohydrolase (Verminephrobacter eiseniae (strain EF01-2)).